Reading from the N-terminus, the 347-residue chain is GMP reductase (347 aa).

108-131 (ADFEKTVQILALDPALNFVCIDVA) contributes to the NADP(+) binding site. K(+)-binding residues include Gly-181 and Gly-183. Cys-186 acts as the Thioimidate intermediate in catalysis. 216–239 (IVSDGGCTMPGDVAKAFGGGADFV) provides a ligand contact to NADP(+).

Belongs to the IMPDH/GMPR family. GuaC type 1 subfamily. Homotetramer.

It carries out the reaction IMP + NH4(+) + NADP(+) = GMP + NADPH + 2 H(+). Its function is as follows. Catalyzes the irreversible NADPH-dependent deamination of GMP to IMP. It functions in the conversion of nucleobase, nucleoside and nucleotide derivatives of G to A nucleotides, and in maintaining the intracellular balance of A and G nucleotides. This is GMP reductase from Salmonella paratyphi B (strain ATCC BAA-1250 / SPB7).